The following is a 253-amino-acid chain: Ribosome maturation factor RimP (253 aa).

Basic and acidic residues predominate over residues 186-199 (RRGKAAEREKKRDL). The interval 186–253 (RRGKAAEREK…RARRGEIDPD (68 aa)) is disordered. Residues 201–216 (LAPPLAPHAKPAAQAK) show a composition bias toward low complexity. Positions 240–253 (LAADRARRGEIDPD) are enriched in basic and acidic residues.

The protein belongs to the RimP family.

The protein resides in the cytoplasm. Required for maturation of 30S ribosomal subunits. The protein is Ribosome maturation factor RimP of Bradyrhizobium sp. (strain BTAi1 / ATCC BAA-1182).